A 271-amino-acid polypeptide reads, in one-letter code: Acyl-[acyl-carrier-protein]--UDP-N-acetylglucosamine O-acyltransferase (271 aa).

The protein belongs to the transferase hexapeptide repeat family. LpxA subfamily. As to quaternary structure, homotrimer.

Its subcellular location is the cytoplasm. The enzyme catalyses a (3R)-hydroxyacyl-[ACP] + UDP-N-acetyl-alpha-D-glucosamine = a UDP-3-O-[(3R)-3-hydroxyacyl]-N-acetyl-alpha-D-glucosamine + holo-[ACP]. It functions in the pathway glycolipid biosynthesis; lipid IV(A) biosynthesis; lipid IV(A) from (3R)-3-hydroxytetradecanoyl-[acyl-carrier-protein] and UDP-N-acetyl-alpha-D-glucosamine: step 1/6. Its function is as follows. Involved in the biosynthesis of lipid A, a phosphorylated glycolipid that anchors the lipopolysaccharide to the outer membrane of the cell. This chain is Acyl-[acyl-carrier-protein]--UDP-N-acetylglucosamine O-acyltransferase, found in Azorhizobium caulinodans (strain ATCC 43989 / DSM 5975 / JCM 20966 / LMG 6465 / NBRC 14845 / NCIMB 13405 / ORS 571).